A 509-amino-acid chain; its full sequence is MKYWQAILFFLFGIAFANNLNIPWKACPNYKTYSGRRHYPATGPLRLPFQRPATSCRTFHSKSVEQTIEDVKEQLEDEDLARLFENCMPNTLDTTIRWHAADSHNPQTLVITGDIPAEWIRDSANQLLPYLPLAKSDSPLATLILGAIQTQAEMLIQFPYCNAFQPPKQSFLSGNDNGQSDRVTPAYDPAVVFECKYELDSLASFLKLSYTYWLYTKDQSIFTVKWLAAVERIIQVLEEQSSPSFDEKTGLPKDPVYTFLRNTDSGTETLGLAGRGFPLNANASLIRSAFRPSDDACVLQYFIPANAMMVVELSHLNQMLQASGHADIARTALVWANKIQKGIDQHGIVDHPKFGKVYAYEVDGYGSILFMDDANVPSLLSLPYLGFVERDDPVYVNTRKMILSSEGNPYYLKGKVISGIGGPHIGLRNVWPMSLIVQALTSDDDDEIMSLLDVLKHSTAGLGLMHESVDVSSFKSFTRPWFSWANSLFAELILDLLERKPHLLKKNAS.

5 helical membrane passes run 4 to 24 (WQAI…NIPW), 140 to 160 (LATL…QFPY), 296 to 316 (ACVL…LSHL), 368 to 388 (ILFM…LGFV), and 417 to 437 (ISGI…SLIV).

It localises to the endoplasmic reticulum membrane. Functionally, has a role in meiosis. This is Meiotically up-regulated gene 157 protein (mug157) from Schizosaccharomyces pombe (strain 972 / ATCC 24843) (Fission yeast).